The following is a 188-amino-acid chain: MNLLIVGLGNPGSNFLHTRHNVGFGLIDKLVMKNALSLRKAKNYEYADFNIDSRRIVLIKPLTYMNLSGNIFPFVFSKFYMKINNLLVVVDNVDLPLGKCRLRKVGGASTHNGLRSISESLGSTKYGRLYIGVGNNSAFALKDFVLSKFNDSELVRVKNVFNFLSEEILGIDEFSFEHKIATINSSSF.

Phe15 contributes to the tRNA binding site. His20 functions as the Proton acceptor in the catalytic mechanism. 3 residues coordinate tRNA: Tyr64, Asn66, and Asn112.

Belongs to the PTH family. In terms of assembly, monomer.

The protein localises to the cytoplasm. It catalyses the reaction an N-acyl-L-alpha-aminoacyl-tRNA + H2O = an N-acyl-L-amino acid + a tRNA + H(+). Hydrolyzes ribosome-free peptidyl-tRNAs (with 1 or more amino acids incorporated), which drop off the ribosome during protein synthesis, or as a result of ribosome stalling. In terms of biological role, catalyzes the release of premature peptidyl moieties from peptidyl-tRNA molecules trapped in stalled 50S ribosomal subunits, and thus maintains levels of free tRNAs and 50S ribosomes. The sequence is that of Peptidyl-tRNA hydrolase from Borrelia duttonii (strain Ly).